The sequence spans 209 residues: Uracil phosphoribosyltransferase (209 aa).

5-phospho-alpha-D-ribose 1-diphosphate-binding positions include Arg-79, Arg-104, and 131–139 (DPMLATGGS). Residues Ile-194 and 199–201 (GDA) contribute to the uracil site. Residue Asp-200 participates in 5-phospho-alpha-D-ribose 1-diphosphate binding.

It belongs to the UPRTase family. Mg(2+) serves as cofactor.

It catalyses the reaction UMP + diphosphate = 5-phospho-alpha-D-ribose 1-diphosphate + uracil. The protein operates within pyrimidine metabolism; UMP biosynthesis via salvage pathway; UMP from uracil: step 1/1. Allosterically activated by GTP. In terms of biological role, catalyzes the conversion of uracil and 5-phospho-alpha-D-ribose 1-diphosphate (PRPP) to UMP and diphosphate. The polypeptide is Uracil phosphoribosyltransferase (Clostridium botulinum (strain Alaska E43 / Type E3)).